We begin with the raw amino-acid sequence, 568 residues long: Type 3 secretion system secretin (568 aa).

Positions 1-15 (MAAALLLWTAGTVCA) are cleaved as a signal peptide. Residues 203 to 292 (YGGDGPSDSG…RGSTPIIRAD (90 aa)) are disordered. Positions 243–257 (LGGGKSPLPPGGTGQ) are enriched in gly residues. Residues 273 to 284 (NRLRSDELDDRG) show a composition bias toward basic and acidic residues.

It belongs to the bacterial secretin family. T3SS SctC subfamily. The core secretion machinery of the T3SS is composed of approximately 20 different proteins, including cytoplasmic components, a base, an export apparatus and a needle. This subunit is part of the base, which anchors the injectisome in the bacterial cell envelope. Forms a stable homooligomeric complex.

The protein resides in the cell outer membrane. Its function is as follows. Component of the type III secretion system (T3SS), also called injectisome, which is used to inject bacterial effector proteins into eukaryotic host cells. Forms a ring-shaped multimeric structure with an apparent central pore in the outer membrane. The polypeptide is Type 3 secretion system secretin (Ralstonia nicotianae (strain ATCC BAA-1114 / GMI1000) (Ralstonia solanacearum)).